A 191-amino-acid chain; its full sequence is dTTP/UTP pyrophosphatase (191 aa).

The Proton acceptor role is filled by D64.

This sequence belongs to the Maf family. YhdE subfamily. The cofactor is a divalent metal cation.

The protein localises to the cytoplasm. It carries out the reaction dTTP + H2O = dTMP + diphosphate + H(+). The catalysed reaction is UTP + H2O = UMP + diphosphate + H(+). Its function is as follows. Nucleoside triphosphate pyrophosphatase that hydrolyzes dTTP and UTP. May have a dual role in cell division arrest and in preventing the incorporation of modified nucleotides into cellular nucleic acids. The chain is dTTP/UTP pyrophosphatase from Thermosipho africanus (strain TCF52B).